The primary structure comprises 98 residues: uncharacterized protein (98 aa).

A helical transmembrane segment spans residues 10-30 (LYGFFAVTGVLIASFIIGEIV).

Its subcellular location is the host membrane. This is an uncharacterized protein from Saccharolobus islandicus (Sulfolobus islandicus).